The following is a 438-amino-acid chain: Probable tRNA pseudouridine synthase D (438 aa).

D86 functions as the Nucleophile in the catalytic mechanism. One can recognise a TRUD domain in the interval 165 to 390; sequence GVPNFFGIQR…SKGTRRELLL (226 aa).

It belongs to the pseudouridine synthase TruD family.

The catalysed reaction is uridine(13) in tRNA = pseudouridine(13) in tRNA. Its function is as follows. Could be responsible for synthesis of pseudouridine from uracil-13 in transfer RNAs. The chain is Probable tRNA pseudouridine synthase D from Methanosarcina barkeri (strain Fusaro / DSM 804).